The chain runs to 179 residues: MSLKKRYRETIQPKLQKDLSLTNIHEVPKVVKVTVNRGLGEAAANAKSLEASVNELAQITGQKVVVTRAKKAIAAFKIRQGMPIGCAVTLRGDRMYAFLERLINLALPRIRDFRGVSPKSFDGRGNYTLGVREQIIFPEISFDKIDAIRGMDITIVTTARSDEEGRALLREMGMPFQSN.

Belongs to the universal ribosomal protein uL5 family. Part of the 50S ribosomal subunit; part of the 5S rRNA/L5/L18/L25 subcomplex. Contacts the 5S rRNA and the P site tRNA. Forms a bridge to the 30S subunit in the 70S ribosome.

This is one of the proteins that bind and probably mediate the attachment of the 5S RNA into the large ribosomal subunit, where it forms part of the central protuberance. In the 70S ribosome it contacts protein S13 of the 30S subunit (bridge B1b), connecting the 2 subunits; this bridge is implicated in subunit movement. Contacts the P site tRNA; the 5S rRNA and some of its associated proteins might help stabilize positioning of ribosome-bound tRNAs. The polypeptide is Large ribosomal subunit protein uL5 (Parasynechococcus marenigrum (strain WH8102)).